The following is a 215-amino-acid chain: Probable phosphoglycerate mutase GpmB (215 aa).

Residues 8 to 15 (RHGETQWN), 21 to 22 (QG), Arg-58, Lys-60, 82 to 85 (ELDM), 104 to 105 (RR), and 151 to 152 (GI) contribute to the substrate site. The active-site Tele-phosphohistidine intermediate is His-9. Glu-82 acts as the Proton donor/acceptor in catalysis.

It belongs to the phosphoglycerate mutase family. GpmB subfamily.

The enzyme catalyses (2R)-2-phosphoglycerate = (2R)-3-phosphoglycerate. Its pathway is carbohydrate degradation; glycolysis; pyruvate from D-glyceraldehyde 3-phosphate: step 3/5. The polypeptide is Probable phosphoglycerate mutase GpmB (Salmonella paratyphi A (strain AKU_12601)).